A 223-amino-acid chain; its full sequence is Endonuclease V (223 aa).

Residues Asp-35 and Asp-103 each contribute to the Mg(2+) site.

Belongs to the endonuclease V family. The cofactor is Mg(2+).

The protein resides in the cytoplasm. The catalysed reaction is Endonucleolytic cleavage at apurinic or apyrimidinic sites to products with a 5'-phosphate.. DNA repair enzyme involved in the repair of deaminated bases. Selectively cleaves double-stranded DNA at the second phosphodiester bond 3' to a deoxyinosine leaving behind the intact lesion on the nicked DNA. This Escherichia coli O139:H28 (strain E24377A / ETEC) protein is Endonuclease V.